The primary structure comprises 342 residues: Protein-ribulosamine 3-kinase, chloroplastic (342 aa).

The transit peptide at 1-46 (MANVALLSAASPSTSSAAPRLRHVARRRPSRRSACPRSAASRLSIM) directs the protein to the chloroplast. ATP is bound at residue 141 to 143 (EFI). The active-site Proton acceptor is the Asp-246.

This sequence belongs to the fructosamine kinase family.

The protein resides in the plastid. The protein localises to the chloroplast. It carries out the reaction N(6)-D-ribulosyl-L-lysyl-[protein] + ATP = N(6)-(3-O-phospho-D-ribulosyl)-L-lysyl-[protein] + ADP + H(+). It catalyses the reaction N(6)-(D-erythrulosyl)-L-lysyl-[protein] + ATP = N(6)-(3-O-phospho-D-erythrulosyl)-L-lysyl-[protein] + ADP + H(+). Functionally, initiates a process leading to the deglycation of proteins. Phosphorylates low-molecular-mass and protein-bound erythrulosamines and ribulosamines, but not fructosamines or psicosamines, on the third carbon of the sugar moiety. Protein-bound erythrulosamine 3-phosphates and ribulosamine 3-phosphates are unstable and decompose under physiological conditions. The protein is Protein-ribulosamine 3-kinase, chloroplastic of Oryza sativa subsp. indica (Rice).